The primary structure comprises 913 residues: Sterol uptake control protein 2 (913 aa).

The segment at residues 50–80 is a DNA-binding region (zn(2)-C6 fungal-type); the sequence is GCDNCKRRRVKCDEGKPACRKCTNMKLECQY. Disordered stretches follow at residues 103–173 and 216–258; these read GSVE…SMGL and GNMG…LAGS. A Phosphothreonine modification is found at T122. Basic and acidic residues predominate over residues 150–164; the sequence is SESEEKSSAPIEDKN. Over residues 222 to 241 the composition is skewed to low complexity; sequence QLQQQQQVQQQSQPQTQAQQ. Residues 303-346 adopt a coiled-coil conformation; it reads QQHQQVQLQQYQQLRQEQHQQVQQQQQEQLQQYQQHFLQQQQQV. Disordered regions lie at residues 347 to 385 and 453 to 489; these read LLQQEQQPNDEEGGVQEENSKKVKEGPLQSQTSETTLNS and MQEHHERAAASVKENDGQLSDTKSPAPSNNAQGGSAS. Residues 374–385 are compositionally biased toward polar residues; that stretch reads LQSQTSETTLNS. Residues 440–472 adopt a coiled-coil conformation; the sequence is ATKASNAEEALANMQEHHERAAASVKENDGQLS. Positions 454–468 are enriched in basic and acidic residues; the sequence is QEHHERAAASVKEND. Polar residues predominate over residues 469-487; that stretch reads GQLSDTKSPAPSNNAQGGS. Residue S519 is modified to Phosphoserine. A compositionally biased stretch (polar residues) spans 552–562; the sequence is EPTISLQTSQT. A disordered region spans residues 552–571; that stretch reads EPTISLQTSQTENEDDASRQ.

It is found in the nucleus. Functionally, transcription factor that is involved in activation of anaerobic genes such as DAN/TIR cell wall mannoprotein genes and YML083c. Appears to bind to anaerobic response elements (AR1) with the consensus sequence 5'-TCGTTYAG-3' present in the promoter regions of DAN/TIR genes. Involved in sterol uptake and regulation of the sterol biosynthesis. Binds to sterol regulatory elements (SRE) with the consensus sequence 5'-TCGTATA-3' present in ERG2 and ERG3 promoters. May be involved in down-regulation of CWP2 during anaerobic adaptation. This is Sterol uptake control protein 2 (UPC2) from Saccharomyces cerevisiae (strain ATCC 204508 / S288c) (Baker's yeast).